The chain runs to 82 residues: Small ribosomal subunit protein bS16 (82 aa).

The protein belongs to the bacterial ribosomal protein bS16 family.

This Vibrio campbellii (strain ATCC BAA-1116) protein is Small ribosomal subunit protein bS16.